We begin with the raw amino-acid sequence, 374 residues long: Potassium channel subfamily K member 9 (374 aa).

The Cytoplasmic portion of the chain corresponds to 1–8; that stretch reads MKRQNVRT. The chain crosses the membrane as a helical span at residues 9–29; that stretch reads LSLIICTFTYLLVGAAVFDAL. Over 30-88 the chain is Extracellular; it reads ESDYEMREEEKLKAEEIRLKGKYNISSEDYRQLELVIMQSEPHRAGVQWKFAGSFYFAI. Asn53 carries N-linked (GlcNAc...) asparagine glycosylation. The segment at residues 89–101 is an intramembrane region (pore-forming); it reads TVITTIGYGHAAP. Over 102-107 the chain is Extracellular; it reads GTDAGK. Residues 108-128 traverse the membrane as a helical segment; that stretch reads AFCMFYAVLGIPLTLVMFQSL. Residues 129–158 lie on the Cytoplasmic side of the membrane; it reads GERMNTFVKYLLKRIKKCCGMHSTDVSMEN. The helical transmembrane segment at 159-179 threads the bilayer; that stretch reads MVTVGFFSCMGTLCIGAAAFS. Residues 180–194 lie on the Extracellular side of the membrane; that stretch reads HYEEWSFFQAYYYCF. The pore-forming intramembrane region spans 195 to 207; that stretch reads ITLTTIGFGDYVA. The Extracellular segment spans residues 208–218; sequence LQKNRALQKKP. Residues 219–239 traverse the membrane as a helical segment; the sequence is LYVAFSFMYILVGLTVIGAFL. Topologically, residues 240-374 are cytoplasmic; it reads NLVVLRFLTM…HRLMKRRKSI (135 aa).

Belongs to the two pore domain potassium channel (TC 1.A.1.8) family. As to quaternary structure, homodimer. May form heterodimers with other family members.

It localises to the cell membrane. Its function is as follows. pH-dependent, voltage-insensitive, background potassium channel protein. This is Potassium channel subfamily K member 9 (kcnk9) from Xenopus laevis (African clawed frog).